Here is an 811-residue protein sequence, read N- to C-terminus: tRNA(Met) cytidine acetyltransferase TmcA (811 aa).

Residues Q267 and R439 each coordinate ATP. Residues 473–662 (KKEVYLEEPD…GEFTAIVLKP (190 aa)) form the N-acetyltransferase domain. Acetyl-CoA is bound by residues 589-591 (IAT), E629, and R636.

It belongs to the TmcA family.

The protein localises to the cytoplasm. The enzyme catalyses cytidine(34) in elongator tRNA(Met) + acetyl-CoA + ATP + H2O = N(4)-acetylcytidine(34) in elongator tRNA(Met) + ADP + phosphate + CoA + H(+). The catalysed reaction is a cytidine in RNA + acetyl-CoA + ATP + H2O = an N(4)-acetylcytidine in RNA + ADP + phosphate + CoA + H(+). It carries out the reaction a cytidine in tRNA + acetyl-CoA + ATP + H2O = an N(4)-acetylcytidine in tRNA + ADP + phosphate + CoA + H(+). It catalyses the reaction a cytidine in mRNA + acetyl-CoA + ATP + H2O = an N(4)-acetylcytidine in mRNA + ADP + phosphate + CoA + H(+). Functionally, catalyzes the formation of N(4)-acetylcytidine (ac(4)C) at the wobble position of tRNA(Met), by using acetyl-CoA as an acetyl donor and ATP (or GTP). In terms of biological role, catalyzes the formation of 267 N(4)-acetylcytidine (ac(4)C) sites in RNA, almost always on the middle C of a CCG motif. Modifications are found in rRNA, ncRNA, mRNA and tRNA. More acetylation is observed at 95 than at 75 or 85 degrees Celsius. The polypeptide is tRNA(Met) cytidine acetyltransferase TmcA (Thermococcus sp. (strain AM4)).